Reading from the N-terminus, the 297-residue chain is Aspartate dehydrogenase domain-containing protein (297 aa).

A phosphoserine mark is found at serine 24 and serine 172.

The protein belongs to the L-aspartate dehydrogenase family.

In Rattus norvegicus (Rat), this protein is Aspartate dehydrogenase domain-containing protein.